A 97-amino-acid polypeptide reads, in one-letter code: uncharacterized protein (97 aa).

This is an uncharacterized protein from Emericella nidulans (Aspergillus nidulans).